The chain runs to 601 residues: Arginine--tRNA ligase (601 aa).

Residues Pro133 to His143 carry the 'HIGH' region motif.

It belongs to the class-I aminoacyl-tRNA synthetase family. Monomer.

Its subcellular location is the cytoplasm. It carries out the reaction tRNA(Arg) + L-arginine + ATP = L-arginyl-tRNA(Arg) + AMP + diphosphate. The polypeptide is Arginine--tRNA ligase (Flavobacterium psychrophilum (strain ATCC 49511 / DSM 21280 / CIP 103535 / JIP02/86)).